Reading from the N-terminus, the 263-residue chain is 4-hydroxy-tetrahydrodipicolinate reductase (263 aa).

Glycine 10–methionine 15 contacts NAD(+). Arginine 38 provides a ligand contact to NADP(+). Residues glycine 97–threonine 99 and alanine 123–phenylalanine 126 contribute to the NAD(+) site. Catalysis depends on histidine 153, which acts as the Proton donor/acceptor. Histidine 154 serves as a coordination point for (S)-2,3,4,5-tetrahydrodipicolinate. Catalysis depends on lysine 157, which acts as the Proton donor. (S)-2,3,4,5-tetrahydrodipicolinate is bound at residue glycine 163 to threonine 164.

Belongs to the DapB family.

The protein localises to the cytoplasm. The catalysed reaction is (S)-2,3,4,5-tetrahydrodipicolinate + NAD(+) + H2O = (2S,4S)-4-hydroxy-2,3,4,5-tetrahydrodipicolinate + NADH + H(+). It catalyses the reaction (S)-2,3,4,5-tetrahydrodipicolinate + NADP(+) + H2O = (2S,4S)-4-hydroxy-2,3,4,5-tetrahydrodipicolinate + NADPH + H(+). Its pathway is amino-acid biosynthesis; L-lysine biosynthesis via DAP pathway; (S)-tetrahydrodipicolinate from L-aspartate: step 4/4. Its function is as follows. Catalyzes the conversion of 4-hydroxy-tetrahydrodipicolinate (HTPA) to tetrahydrodipicolinate. The sequence is that of 4-hydroxy-tetrahydrodipicolinate reductase from Dehalococcoides mccartyi (strain ATCC BAA-2100 / JCM 16839 / KCTC 5957 / BAV1).